Consider the following 313-residue polypeptide: Ribosomal RNA small subunit methyltransferase H (313 aa).

Residues 35–37 (GGH), Asp-55, Phe-79, Asp-101, and Gln-108 each bind S-adenosyl-L-methionine.

Belongs to the methyltransferase superfamily. RsmH family.

Its subcellular location is the cytoplasm. It carries out the reaction cytidine(1402) in 16S rRNA + S-adenosyl-L-methionine = N(4)-methylcytidine(1402) in 16S rRNA + S-adenosyl-L-homocysteine + H(+). Specifically methylates the N4 position of cytidine in position 1402 (C1402) of 16S rRNA. The protein is Ribosomal RNA small subunit methyltransferase H of Shigella flexneri serotype 5b (strain 8401).